Consider the following 243-residue polypeptide: Ubiquinone/menaquinone biosynthesis C-methyltransferase UbiE (243 aa).

Residues Thr69, Asp90, and 116–117 contribute to the S-adenosyl-L-methionine site; that span reads DA.

It belongs to the class I-like SAM-binding methyltransferase superfamily. MenG/UbiE family.

The catalysed reaction is a 2-demethylmenaquinol + S-adenosyl-L-methionine = a menaquinol + S-adenosyl-L-homocysteine + H(+). It carries out the reaction a 2-methoxy-6-(all-trans-polyprenyl)benzene-1,4-diol + S-adenosyl-L-methionine = a 5-methoxy-2-methyl-3-(all-trans-polyprenyl)benzene-1,4-diol + S-adenosyl-L-homocysteine + H(+). It participates in quinol/quinone metabolism; menaquinone biosynthesis; menaquinol from 1,4-dihydroxy-2-naphthoate: step 2/2. It functions in the pathway cofactor biosynthesis; ubiquinone biosynthesis. Its function is as follows. Methyltransferase required for the conversion of demethylmenaquinol (DMKH2) to menaquinol (MKH2) and the conversion of 2-polyprenyl-6-methoxy-1,4-benzoquinol (DDMQH2) to 2-polyprenyl-3-methyl-6-methoxy-1,4-benzoquinol (DMQH2). The chain is Ubiquinone/menaquinone biosynthesis C-methyltransferase UbiE from Burkholderia vietnamiensis (strain G4 / LMG 22486) (Burkholderia cepacia (strain R1808)).